We begin with the raw amino-acid sequence, 583 residues long: Isocitrate dehydrogenase kinase/phosphatase (583 aa).

ATP contacts are provided by residues 315–321 (APGIRGM) and lysine 336. Residue aspartate 371 is part of the active site.

This sequence belongs to the AceK family.

The protein resides in the cytoplasm. It catalyses the reaction L-seryl-[isocitrate dehydrogenase] + ATP = O-phospho-L-seryl-[isocitrate dehydrogenase] + ADP + H(+). Its function is as follows. Bifunctional enzyme which can phosphorylate or dephosphorylate isocitrate dehydrogenase (IDH) on a specific serine residue. This is a regulatory mechanism which enables bacteria to bypass the Krebs cycle via the glyoxylate shunt in response to the source of carbon. When bacteria are grown on glucose, IDH is fully active and unphosphorylated, but when grown on acetate or ethanol, the activity of IDH declines drastically concomitant with its phosphorylation. This Salmonella heidelberg (strain SL476) protein is Isocitrate dehydrogenase kinase/phosphatase.